We begin with the raw amino-acid sequence, 68 residues long: Tau-scoloptoxin(04)-Ssm1b (68 aa).

The signal sequence occupies residues 1 to 25 (MLKSFCILSVFMVLFLAKFPDLCSG). Positions 26-36 (EEISPLKIVVR) are excised as a propeptide. 2 cysteine pairs are disulfide-bonded: Cys45–Cys56 and Cys50–Cys63. Residues 55-67 (RCSIVDKQCIKKE) are highly charged C-terminal region, binds to TRPV1 channel.

This sequence belongs to the scoloptoxin-04 family. As to expression, expressed by the venom gland.

It localises to the secreted. Functionally, extremely potent agonist and potentiator of TRPV1 (EC(50)=470-521.5 nM (mouse)). It strongly promotes the heat activation process by downshifting the activation threshold temperature. It preferably binds to the activated channel and promotes its opening. Holding the channel closed by cooling prevents binding of this toxin, leaving it ineffective. The toxin binds to the charge-rich outer pore region of the channel where it directly interacts with the pore helix and turret, two adjacent structural elements known to be critical for activation gating of TRPV1. In comparison with Sm1b, induces a TRPV1 desensitization with slower kinetics (20 seconds). In vivo, induces pain in mice after intraplantar injection. Potent agonist and probable potentiator of TRPV1 (EC(50)=38.35 uM (mouse)). Also binds to the outer pore region of TRPV1. In comparison with Sm1a, induces a TRPV1 desensitization with faster kinetics (2 seconds) and leads to a more complete TRPV1 desensitization. Desensitization is achieved by reducing both the open probability and the single-channel conductance upon prolonged exposure. This chain is Tau-scoloptoxin(04)-Ssm1b, found in Scolopendra mutilans (Chinese red-headed centipede).